We begin with the raw amino-acid sequence, 433 residues long: Serine hydroxymethyltransferase (433 aa).

(6S)-5,6,7,8-tetrahydrofolate contacts are provided by residues Leu-133 and 137–139 (GHL). Lys-242 is modified (N6-(pyridoxal phosphate)lysine). 366–368 (SPF) contributes to the (6S)-5,6,7,8-tetrahydrofolate binding site.

Belongs to the SHMT family. As to quaternary structure, homodimer. Pyridoxal 5'-phosphate is required as a cofactor.

It is found in the cytoplasm. It carries out the reaction (6R)-5,10-methylene-5,6,7,8-tetrahydrofolate + glycine + H2O = (6S)-5,6,7,8-tetrahydrofolate + L-serine. It functions in the pathway one-carbon metabolism; tetrahydrofolate interconversion. It participates in amino-acid biosynthesis; glycine biosynthesis; glycine from L-serine: step 1/1. Functionally, catalyzes the reversible interconversion of serine and glycine with tetrahydrofolate (THF) serving as the one-carbon carrier. This reaction serves as the major source of one-carbon groups required for the biosynthesis of purines, thymidylate, methionine, and other important biomolecules. Also exhibits THF-independent aldolase activity toward beta-hydroxyamino acids, producing glycine and aldehydes, via a retro-aldol mechanism. The chain is Serine hydroxymethyltransferase from Beijerinckia indica subsp. indica (strain ATCC 9039 / DSM 1715 / NCIMB 8712).